The sequence spans 1105 residues: uncharacterized protein (1105 aa).

The protein belongs to the mycobacterial PPE family.

This is an uncharacterized protein from Mycobacterium tuberculosis (strain CDC 1551 / Oshkosh).